The chain runs to 209 residues: Kynurenine formamidase (209 aa).

W20 is a substrate binding site. Residues H50, H54, and D56 each coordinate Zn(2+). The active-site Proton donor/acceptor is the H60. H161 and E173 together coordinate Zn(2+).

Belongs to the Cyclase 1 superfamily. KynB family. Homodimer. Zn(2+) serves as cofactor.

The enzyme catalyses N-formyl-L-kynurenine + H2O = L-kynurenine + formate + H(+). It participates in amino-acid degradation; L-tryptophan degradation via kynurenine pathway; L-kynurenine from L-tryptophan: step 2/2. In terms of biological role, catalyzes the hydrolysis of N-formyl-L-kynurenine to L-kynurenine, the second step in the kynurenine pathway of tryptophan degradation. This Bacillus cereus (strain ATCC 10987 / NRS 248) protein is Kynurenine formamidase.